The sequence spans 478 residues: Proline--tRNA ligase (478 aa).

The protein belongs to the class-II aminoacyl-tRNA synthetase family. ProS type 3 subfamily. As to quaternary structure, homodimer.

It is found in the cytoplasm. It carries out the reaction tRNA(Pro) + L-proline + ATP = L-prolyl-tRNA(Pro) + AMP + diphosphate. Catalyzes the attachment of proline to tRNA(Pro) in a two-step reaction: proline is first activated by ATP to form Pro-AMP and then transferred to the acceptor end of tRNA(Pro). In Ignicoccus hospitalis (strain KIN4/I / DSM 18386 / JCM 14125), this protein is Proline--tRNA ligase.